We begin with the raw amino-acid sequence, 598 residues long: Replication protein E1 (598 aa).

The Nuclear localization signal signature appears at 76–78 (KRK). 2 positions are modified to phosphoserine; by host: Ser82 and Ser91. Positions 90–99 (LSPQLQAVKI) match the Nuclear export signal motif. The interval 138 to 302 (SQDGGGDINL…LVSHQAATTA (165 aa)) is DNA-binding region. In terms of domain architecture, SF3 helicase spans 401–551 (VNILSFLIVL…MPFLDDGSPM (151 aa)). Residue 427 to 434 (GPPDTGKS) coordinates ATP. Lys508 participates in a covalent cross-link: Glycyl lysine isopeptide (Lys-Gly) (interchain with G-Cter in SUMO). Residues 573-598 (TDPEEESNGVPSRAFRCTSRSNSDSY) are disordered.

Belongs to the papillomaviridae E1 protein family. As to quaternary structure, can form hexamers. Interacts with E2 protein; this interaction increases E1 DNA binding specificity. Interacts with host DNA polymerase subunit POLA2. Interacts with host single stranded DNA-binding protein RPA1. Interacts with host TOP1; this interaction stimulates the enzymatic activity of TOP1. In terms of processing, phosphorylated. Post-translationally, sumoylated.

The protein localises to the host nucleus. It carries out the reaction Couples ATP hydrolysis with the unwinding of duplex DNA by translocating in the 3'-5' direction.. The catalysed reaction is ATP + H2O = ADP + phosphate + H(+). Its function is as follows. ATP-dependent DNA 3'-5' helicase required for initiation of viral DNA replication. It forms a complex with the viral E2 protein. The E1-E2 complex binds to the replication origin which contains binding sites for both proteins. During the initial step, a dimer of E1 interacts with a dimer of protein E2 leading to a complex that binds the viral origin of replication with high specificity. Then, a second dimer of E1 displaces the E2 dimer in an ATP-dependent manner to form the E1 tetramer. Following this, two E1 monomers are added to each half of the site, which results in the formation of two E1 trimers on the viral ori. Subsequently, two hexamers will be created. The double hexamer acts as a bi-directional helicase machinery and unwinds the viral DNA and then recruits the host DNA polymerase to start replication. The sequence is that of Replication protein E1 from Human papillomavirus 65.